Reading from the N-terminus, the 204-residue chain is Urease accessory protein UreG (204 aa).

Position 11–18 (11–18 (GPVGAGKH)) interacts with GTP.

It belongs to the SIMIBI class G3E GTPase family. UreG subfamily. As to quaternary structure, homodimer. UreD, UreF and UreG form a complex that acts as a GTP-hydrolysis-dependent molecular chaperone, activating the urease apoprotein by helping to assemble the nickel containing metallocenter of UreC. The UreE protein probably delivers the nickel.

Its subcellular location is the cytoplasm. Facilitates the functional incorporation of the urease nickel metallocenter. This process requires GTP hydrolysis, probably effectuated by UreG. This Staphylococcus xylosus protein is Urease accessory protein UreG.